We begin with the raw amino-acid sequence, 1784 residues long: Histone acetyltransferase KAT6B (1784 aa).

The 77-residue stretch at 1–77 (MVKLANPLYT…LASYKDPDNP (77 aa)) folds into the SAMD1-like winged helix (WH) domain. The segment at 72–98 (KDPDNPGRFSSVKPGTFPKSTKESRGS) is disordered. The H15 domain occupies 103-176 (RNVDWNKLLR…KDGPQYRVNY (74 aa)). 2 PHD-type zinc fingers span residues 213-272 (IPIC…CKTC) and 269-320 (CKTC…CRPK). Phosphoserine is present on Ser355. Residues 361–425 (GSMNAFTGRG…ECESGVEDCG (65 aa)) are negatively regulates HAT activity. Lys381 participates in a covalent cross-link: Glycyl lysine isopeptide (Lys-Gly) (interchain with G-Cter in SUMO2). The 275-residue stretch at 423–697 (DCGRYPSVIE…LDPDSLRWTP (275 aa)) folds into the MYST-type HAT domain. Residues 426-716 (RYPSVIEFGK…EEEREAEKEA (291 aa)) are catalytic. Residues 456 to 481 (LYLCEFCLKYMKSKNILLRHSKKCGW) form a C2HC MYST-type zinc finger. An interaction with BRPF1 region spans residues 460-716 (EFCLKYMKSK…EEEREAEKEA (257 aa)). The residue at position 523 (Lys523) is an N6-acetyllysine; by autocatalysis. Acetyl-CoA is bound by residues 564–568 (SCIMI) and 573–579 (QRQGFGR). Glu599 (proton donor/acceptor) is an active-site residue. Residue Ser603 coordinates acetyl-CoA. 4 disordered regions span residues 730–884 (EQEV…RPMP), 904–1163 (RKAF…FKEV), 1195–1273 (SCNS…FQDC), and 1291–1330 (QSPQIATTLDDCQQSDHSSPVSSVHSHPGQSVRSVNSPSV). Positions 733 to 751 (VLSTRANSRQSPAKVQSKN) are enriched in polar residues. N6-acetyllysine is present on residues Lys746, Lys750, and Lys752. Ser756 is modified (phosphoserine). Acidic residues predominate over residues 777 to 819 (SEEEEEEEEDEEEEDEEEEEEEEEDEEEEEEEEEEEEEEEEEN). The span at 820–831 (IQSSPPRLTKPQ) shows a compositional bias: polar residues. Residues 835-854 (IKRKRPFVLKKKRGRKRRRI) show a composition bias toward basic residues. A compositionally biased stretch (low complexity) spans 856-869 (SSVTTETISETTEV). A compositionally biased stretch (basic residues) spans 904 to 914 (RKAFQHQPGKK). Basic and acidic residues-rich tracts occupy residues 938 to 957 (MNDDSRNLKEGSKDNPEPLK) and 1055 to 1064 (EKPEDDLIKP). The span at 1065–1087 (EEEEEEEEEEEEEEGEEEEEEGG) shows a compositional bias: acidic residues. Composition is skewed to basic and acidic residues over residues 1088 to 1101 (NVEKDPDGAKSQEK) and 1107 to 1118 (SPEKEDSARLDD). Residues 1119 to 1128 (HEEEEEEDEE) are compositionally biased toward acidic residues. A compositionally biased stretch (basic and acidic residues) spans 1144–1163 (HMESAEVEKEELPRESFKEV). Residues 1209-1218 (AVPESDEEPP) show a composition bias toward acidic residues. Basic and acidic residues predominate over residues 1224-1240 (QKQDQKNSKEVDTEFKE). Composition is skewed to polar residues over residues 1251 to 1263 (ETVQAVQSLTQES) and 1291 to 1302 (QSPQIATTLDDC). The segment at 1271 to 1784 (QDCAETQEAC…QSLNGSYMRR (514 aa)) is interaction with RUNX1 and RUNX2. Low complexity predominate over residues 1305–1322 (SDHSSPVSSVHSHPGQSV).

It belongs to the MYST (SAS/MOZ) family. As to quaternary structure, component of the MOZ/MORF complex composed at least of ING5, KAT6A, KAT6B, MEAF6 and one of BRPF1, BRD1/BRPF2 and BRPF3. Interacts with RUNX1 and RUNX2. In terms of processing, autoacetylation at Lys-523 is required for proper function.

The protein localises to the nucleus. The catalysed reaction is L-lysyl-[protein] + acetyl-CoA = N(6)-acetyl-L-lysyl-[protein] + CoA + H(+). Functionally, histone acetyltransferase which may be involved in both positive and negative regulation of transcription. Required for RUNX2-dependent transcriptional activation. May be involved in cerebral cortex development. Component of the MOZ/MORF complex which has a histone H3 acetyltransferase activity. The sequence is that of Histone acetyltransferase KAT6B (KAT6B) from Macaca fascicularis (Crab-eating macaque).